The chain runs to 314 residues: 2,3-dihydroxyphenylpropionate/2,3-dihydroxicinnamic acid 1,2-dioxygenase (314 aa).

Histidine 115 acts as the Proton donor in catalysis. Histidine 179 functions as the Proton acceptor in the catalytic mechanism.

It belongs to the LigB/MhpB extradiol dioxygenase family. As to quaternary structure, homotetramer. Requires Fe(2+) as cofactor.

The catalysed reaction is 3-(2,3-dihydroxyphenyl)propanoate + O2 = (2Z,4E)-2-hydroxy-6-oxonona-2,4-dienedioate + H(+). It carries out the reaction (2E)-3-(2,3-dihydroxyphenyl)prop-2-enoate + O2 = (2Z,4E,7E)-2-hydroxy-6-oxonona-2,4,7-trienedioate + H(+). It participates in aromatic compound metabolism; 3-phenylpropanoate degradation. Functionally, catalyzes the non-heme iron(II)-dependent oxidative cleavage of 2,3-dihydroxyphenylpropionic acid and 2,3-dihydroxicinnamic acid into 2-hydroxy-6-ketononadienedioate and 2-hydroxy-6-ketononatrienedioate, respectively. This chain is 2,3-dihydroxyphenylpropionate/2,3-dihydroxicinnamic acid 1,2-dioxygenase, found in Escherichia coli O157:H7.